A 438-amino-acid polypeptide reads, in one-letter code: Enolase (438 aa).

Residue Gln164 coordinates (2R)-2-phosphoglycerate. The active-site Proton donor is Glu206. The Mg(2+) site is built by Asp243, Glu289, and Asp316. (2R)-2-phosphoglycerate is bound by residues Lys341, Arg370, Ser371, and Lys392. Lys341 serves as the catalytic Proton acceptor.

This sequence belongs to the enolase family. Mg(2+) serves as cofactor.

It localises to the cytoplasm. Its subcellular location is the secreted. It is found in the cell surface. It catalyses the reaction (2R)-2-phosphoglycerate = phosphoenolpyruvate + H2O. It participates in carbohydrate degradation; glycolysis; pyruvate from D-glyceraldehyde 3-phosphate: step 4/5. Its function is as follows. Catalyzes the reversible conversion of 2-phosphoglycerate (2-PG) into phosphoenolpyruvate (PEP). It is essential for the degradation of carbohydrates via glycolysis. The polypeptide is Enolase (Borrelia garinii subsp. bavariensis (strain ATCC BAA-2496 / DSM 23469 / PBi) (Borreliella bavariensis)).